The following is a 229-amino-acid chain: PKHD-type hydroxylase RPA3479 (229 aa).

The Fe2OG dioxygenase domain occupies 78–180; that stretch reads QIFPPLFNRY…RVASFFWLQS (103 aa). The Fe cation site is built by H98, D100, and H161. A 2-oxoglutarate-binding site is contributed by R171.

It depends on Fe(2+) as a cofactor. The cofactor is L-ascorbate.

The chain is PKHD-type hydroxylase RPA3479 from Rhodopseudomonas palustris (strain ATCC BAA-98 / CGA009).